Here is a 527-residue protein sequence, read N- to C-terminus: Phosphoenolpyruvate carboxykinase (ATP) (527 aa).

Arginine 54, tyrosine 190, and lysine 196 together coordinate substrate. ATP-binding positions include lysine 196, histidine 215, and 231 to 239 (GLSGTGKTT). The Mn(2+) site is built by lysine 196 and histidine 215. Position 252 (aspartate 252) interacts with Mn(2+). Residues glutamate 280, arginine 317, 436–437 (RI), and threonine 442 each bind ATP. Position 317 (arginine 317) interacts with substrate.

The protein belongs to the phosphoenolpyruvate carboxykinase (ATP) family. Mn(2+) serves as cofactor.

It is found in the cytoplasm. The catalysed reaction is oxaloacetate + ATP = phosphoenolpyruvate + ADP + CO2. The protein operates within carbohydrate biosynthesis; gluconeogenesis. In terms of biological role, involved in the gluconeogenesis. Catalyzes the conversion of oxaloacetate (OAA) to phosphoenolpyruvate (PEP) through direct phosphoryl transfer between the nucleoside triphosphate and OAA. The chain is Phosphoenolpyruvate carboxykinase (ATP) from Oceanobacillus iheyensis (strain DSM 14371 / CIP 107618 / JCM 11309 / KCTC 3954 / HTE831).